The sequence spans 664 residues: Frizzled-3 (664 aa).

The signal sequence occupies residues 1–16 (MAAYLISFIWVSVILA). Topologically, residues 17-204 (QKSMGHSLFA…REELSFARYF (188 aa)) are extracellular. The FZ domain occupies 22 to 135 (HSLFACEPIT…CSRFPDCDEP (114 aa)). 5 cysteine pairs are disulfide-bonded: Cys27/Cys88, Cys35/Cys81, Cys72/Cys109, Cys98/Cys132, and Cys102/Cys126. An N-linked (GlcNAc...) asparagine glycan is attached at Asn41. A helical transmembrane segment spans residues 205 to 225 (IGVISIVCLSATLFTFLTFLI). The Cytoplasmic portion of the chain corresponds to 226–236 (DVTRFRYPERP). A helical transmembrane segment spans residues 237-257 (IIFYAVCYMMVSLIFFIGFLL). The Extracellular portion of the chain corresponds to 258 to 287 (EDKVACNGANPSQYKASTVTQGSHNKACTM). The chain crosses the membrane as a helical span at residues 288–308 (LFMVLYFFTMAGSVWWVILTI). Residues 309 to 327 (TWFLAAVPKWGSEAIEKKA) lie on the Cytoplasmic side of the membrane. Residues 328–348 (LLFHASAWGIPGTLTIILLAM) traverse the membrane as a helical segment. At 349–373 (NKIEGDNISGVCFVGLYDVHALRYF) the chain is on the extracellular side. N-linked (GlcNAc...) asparagine glycosylation is present at Asn355. Residues 374 to 394 (VLAPLCLDVVVGVSLLLAGII) form a helical membrane-spanning segment. Residues 395–419 (SLNRVRIEIPLEKENQDKLVKFMIR) lie on the Cytoplasmic side of the membrane. A helical transmembrane segment spans residues 420–440 (IGVFSILYLVPLLVVIGCYFY). Residues 441 to 476 (EQAYRGVWETTWVQERCREYHIPCPYKVTQTSRPDL) lie on the Extracellular side of the membrane. Residues 477–497 (ILFLMKYLMLLVVGIPSVFWV) form a helical membrane-spanning segment. Residues 498–664 (GSKKTCFEWA…RVIEADATSA (167 aa)) are Cytoplasmic-facing. The Lys-Thr-X-X-X-Trp motif, mediates interaction with the PDZ domain of Dvl family members motif lies at 501–506 (KTCFEW). The disordered stretch occupies residues 537-664 (RDPNTPIVRK…RVIEADATSA (128 aa)). Composition is skewed to polar residues over residues 549 to 564 (GTST…STQL) and 573 to 585 (KAGS…SSYH).

This sequence belongs to the G-protein coupled receptor Fz/Smo family. In terms of tissue distribution, expression restricted to the early nervous system.

The protein resides in the membrane. The protein localises to the cell membrane. Its subcellular location is the cell surface. It localises to the apical cell membrane. Receptor for Wnt proteins. Most of frizzled receptors are coupled to the beta-catenin canonical signaling pathway, which leads to the activation of disheveled proteins, inhibition of GSK-3 kinase, nuclear accumulation of beta-catenin and activation of Wnt target genes. A second signaling pathway involving PKC and calcium fluxes has been seen for some family members, but it is not yet clear if it represents a distinct pathway or if it can be integrated in the canonical pathway, as PKC seems to be required for Wnt-mediated inactivation of GSK-3 kinase. Both pathways seem to involve interactions with G-proteins. Activated by Wnt8. Involved in transduction and intercellular transmission of polarity information during tissue morphogenesis and/or in differentiated tissues. Plays a role in controlling early axon growth and guidance processes necessary for the formation of a subset of central and peripheral major fiber tracts. Involved in the migration of cranial neural crest cells. May also be implicated in the transmission of sensory information from the trunk and limbs to the brain. Controls commissural sensory axons guidance after midline crossing along the anterior-posterior axis in the developing spinal cord in a Wnt-dependent signaling pathway. Together with FZD6, is involved in the neural tube closure and plays a role in the regulation of the establishment of planar cell polarity (PCP). Promotes neurogenesis by maintaining sympathetic neuroblasts within the cell cycle in a beta-catenin-dependent manner. The chain is Frizzled-3 (fzd3) from Xenopus laevis (African clawed frog).